The primary structure comprises 913 residues: Isoleucine--tRNA ligase (913 aa).

A 'HIGH' region motif is present at residues 57-67 (PYANGDIHLGT). An L-isoleucyl-5'-AMP-binding site is contributed by Glu-549. A 'KMSKS' region motif is present at residues 590–594 (KMSKS). Lys-593 provides a ligand contact to ATP. Zn(2+) is bound by residues Cys-881, Cys-884, Cys-901, and Cys-904.

Belongs to the class-I aminoacyl-tRNA synthetase family. IleS type 1 subfamily. Monomer. Requires Zn(2+) as cofactor.

Its subcellular location is the cytoplasm. It carries out the reaction tRNA(Ile) + L-isoleucine + ATP = L-isoleucyl-tRNA(Ile) + AMP + diphosphate. Functionally, catalyzes the attachment of isoleucine to tRNA(Ile). As IleRS can inadvertently accommodate and process structurally similar amino acids such as valine, to avoid such errors it has two additional distinct tRNA(Ile)-dependent editing activities. One activity is designated as 'pretransfer' editing and involves the hydrolysis of activated Val-AMP. The other activity is designated 'posttransfer' editing and involves deacylation of mischarged Val-tRNA(Ile). The polypeptide is Isoleucine--tRNA ligase (Fervidobacterium nodosum (strain ATCC 35602 / DSM 5306 / Rt17-B1)).